The primary structure comprises 319 residues: 1-aminocyclopropane-1-carboxylate oxidase (319 aa).

The region spanning 153–253 (PTFGTKVSNY…RMSIASFYNP (101 aa)) is the Fe2OG dioxygenase domain. The Fe cation site is built by His-177, Asp-179, and His-234.

The protein belongs to the iron/ascorbate-dependent oxidoreductase family. Fe cation is required as a cofactor.

It catalyses the reaction 1-aminocyclopropane-1-carboxylate + L-ascorbate + O2 = ethene + L-dehydroascorbate + hydrogen cyanide + CO2 + 2 H2O. It functions in the pathway alkene biosynthesis; ethylene biosynthesis via S-adenosyl-L-methionine; ethylene from S-adenosyl-L-methionine: step 2/2. This Prunus mume (Japanese apricot) protein is 1-aminocyclopropane-1-carboxylate oxidase (ACO1).